We begin with the raw amino-acid sequence, 250 residues long: MHRGKGMKFVGDSRIPAVRKPNIPKDYSEYPGKTEVFWPNFLLKEWLVGSVFLVGFLCLTVAHPSPLERIADPTDTTYIPLPDWYFLFLYQLLKYSYASGPYTVIGAIVMPGLAFGALLLAPFLDRGPERRPWKRPVATGMMLLTLAAIVYLTWESVVTHDWEKAAEQGKIRAEVEIDTNAEGYKIAQANTCTSCHGENLSGGAGPSLVGTGLTAEEIAKIAKEGQGSMPGGIFKGTDEELQKMANSSPA.

3 consecutive transmembrane segments (helical) span residues 46–62 (WLVG…LTVA), 104–124 (VIGA…APFL), and 137–157 (VATG…WESV). The region spanning 178-250 (DTNAEGYKIA…LQKMANSSPA (73 aa)) is the Cytochrome c domain. Cys192, Cys195, and His196 together coordinate heme c. The tract at residues 229–250 (MPGGIFKGTDEELQKMANSSPA) is disordered.

Belongs to the cytochrome b family. In terms of assembly, the main subunits of the menaquinol:cytochrome c complex are a Rieske-type iron-sulfur protein (QcrA), a cytochrome b (QcrB) and a cytochrome c (QcrC). Requires heme c as cofactor.

The protein localises to the cell membrane. Functionally, component of the menaquinol:cytochrome c reductase complex. This Geobacillus thermodenitrificans protein is Menaquinol:cytochrome c reductase cytochrome c subunit (qcrC).